Here is a 423-residue protein sequence, read N- to C-terminus: ATP-dependent Clp protease ATP-binding subunit ClpX (423 aa).

A ClpX-type ZB domain is found at M1 to L50. 4 residues coordinate Zn(2+): C9, C12, C31, and C34. Residue P126–Y133 coordinates ATP.

It belongs to the ClpX chaperone family. In terms of assembly, component of the ClpX-ClpP complex. Forms a hexameric ring that, in the presence of ATP, binds to fourteen ClpP subunits assembled into a disk-like structure with a central cavity, resembling the structure of eukaryotic proteasomes.

Functionally, ATP-dependent specificity component of the Clp protease. It directs the protease to specific substrates. Can perform chaperone functions in the absence of ClpP. The protein is ATP-dependent Clp protease ATP-binding subunit ClpX of Tropheryma whipplei (strain Twist) (Whipple's bacillus).